The following is a 211-amino-acid chain: Potassium-transporting ATPase KdpC subunit (211 aa).

The helical transmembrane segment at 13-35 (VVTMVLTGLLYPLAVTGLAQLLF) threads the bilayer.

It belongs to the KdpC family. The system is composed of three essential subunits: KdpA, KdpB and KdpC.

It is found in the cell inner membrane. Part of the high-affinity ATP-driven potassium transport (or Kdp) system, which catalyzes the hydrolysis of ATP coupled with the electrogenic transport of potassium into the cytoplasm. This subunit acts as a catalytic chaperone that increases the ATP-binding affinity of the ATP-hydrolyzing subunit KdpB by the formation of a transient KdpB/KdpC/ATP ternary complex. The polypeptide is Potassium-transporting ATPase KdpC subunit (Myxococcus xanthus (strain DK1622)).